An 883-amino-acid chain; its full sequence is Alanine--tRNA ligase (883 aa).

Residues H560, H564, C665, and H669 each coordinate Zn(2+).

The protein belongs to the class-II aminoacyl-tRNA synthetase family. The cofactor is Zn(2+).

The protein resides in the cytoplasm. The catalysed reaction is tRNA(Ala) + L-alanine + ATP = L-alanyl-tRNA(Ala) + AMP + diphosphate. In terms of biological role, catalyzes the attachment of alanine to tRNA(Ala) in a two-step reaction: alanine is first activated by ATP to form Ala-AMP and then transferred to the acceptor end of tRNA(Ala). Also edits incorrectly charged Ser-tRNA(Ala) and Gly-tRNA(Ala) via its editing domain. In Mesomycoplasma hyopneumoniae (strain 232) (Mycoplasma hyopneumoniae), this protein is Alanine--tRNA ligase.